The primary structure comprises 69 residues: Protein transport protein Sec61 subunit gamma (69 aa).

At 1 to 32 (MDAVDSVVDPLREFAKDSVRLVKRCHKPDRKE) the chain is on the cytoplasmic side. A helical membrane pass occupies residues 33–61 (FTKVAARTAIGFVVMGFVGFFVKLIFIPI). The Extracellular segment spans residues 62–69 (NNIIVGSG).

This sequence belongs to the SecE/SEC61-gamma family. In terms of assembly, heterotrimeric complex composed of SEC61-alpha, SEC61-beta and SEC61-gamma.

It localises to the endoplasmic reticulum membrane. Its function is as follows. Necessary for protein translocation in the endoplasmic reticulum. In Oryza sativa subsp. japonica (Rice), this protein is Protein transport protein Sec61 subunit gamma.